Consider the following 163-residue polypeptide: ATP synthase subunit b', chloroplastic (163 aa).

A helical membrane pass occupies residues 26–46 (ATLPLMALQFILLTVILTFVF).

Belongs to the ATPase B chain family. As to quaternary structure, F-type ATPases have 2 components, F(1) - the catalytic core - and F(0) - the membrane proton channel. F(1) has five subunits: alpha(3), beta(3), gamma(1), delta(1), epsilon(1). F(0) has four main subunits: a(1), b(1), b'(1) and c(10-14). The alpha and beta chains form an alternating ring which encloses part of the gamma chain. F(1) is attached to F(0) by a central stalk formed by the gamma and epsilon chains, while a peripheral stalk is formed by the delta, b and b' chains.

It localises to the plastid. The protein localises to the chloroplast thylakoid membrane. Functionally, f(1)F(0) ATP synthase produces ATP from ADP in the presence of a proton or sodium gradient. F-type ATPases consist of two structural domains, F(1) containing the extramembraneous catalytic core and F(0) containing the membrane proton channel, linked together by a central stalk and a peripheral stalk. During catalysis, ATP synthesis in the catalytic domain of F(1) is coupled via a rotary mechanism of the central stalk subunits to proton translocation. In terms of biological role, component of the F(0) channel, it forms part of the peripheral stalk, linking F(1) to F(0). The b'-subunit is a diverged and duplicated form of b found in plants and photosynthetic bacteria. In Ochrosphaera neapolitana, this protein is ATP synthase subunit b', chloroplastic.